A 518-amino-acid chain; its full sequence is Xylose import ATP-binding protein XylG (518 aa).

ABC transporter domains are found at residues 6–245 (LQMN…VGRE) and 262–507 (FEAR…LSHS). 38 to 45 (GENGAGKS) provides a ligand contact to ATP.

This sequence belongs to the ABC transporter superfamily. Xylose importer (TC 3.A.1.2.4) family. The complex is composed of two ATP-binding proteins (XylG), two transmembrane proteins (XylH) and a solute-binding protein (XylF).

The protein localises to the cell inner membrane. The catalysed reaction is D-xylose(out) + ATP + H2O = D-xylose(in) + ADP + phosphate + H(+). Its function is as follows. Part of the ABC transporter complex XylFGH involved in xylose import. Responsible for energy coupling to the transport system. This is Xylose import ATP-binding protein XylG from Pseudomonas syringae pv. syringae (strain B728a).